The following is a 161-amino-acid chain: Transcription elongation factor GreA (161 aa).

Residues 43-68 (SENAEYEAAREKQAFVEARIKHLEDI) adopt a coiled-coil conformation.

This sequence belongs to the GreA/GreB family.

Necessary for efficient RNA polymerase transcription elongation past template-encoded arresting sites. The arresting sites in DNA have the property of trapping a certain fraction of elongating RNA polymerases that pass through, resulting in locked ternary complexes. Cleavage of the nascent transcript by cleavage factors such as GreA or GreB allows the resumption of elongation from the new 3'terminus. GreA releases sequences of 2 to 3 nucleotides. This is Transcription elongation factor GreA from Rickettsia bellii (strain OSU 85-389).